Consider the following 849-residue polypeptide: Probable ubiquitin carboxyl-terminal hydrolase 1 (849 aa).

One can recognise a DUSP domain in the interval 20–120 (QPASLPFQDS…EGLAIERKVL (101 aa)). The USP domain occupies 279–848 (CGLYNLGNSC…SAYVLFYRAK (570 aa)). Cys-288 functions as the Nucleophile in the catalytic mechanism. His-806 (proton acceptor) is an active-site residue.

It belongs to the peptidase C19 family.

It carries out the reaction Thiol-dependent hydrolysis of ester, thioester, amide, peptide and isopeptide bonds formed by the C-terminal Gly of ubiquitin (a 76-residue protein attached to proteins as an intracellular targeting signal).. The protein is Probable ubiquitin carboxyl-terminal hydrolase 1 (ubp1) of Schizosaccharomyces pombe (strain 972 / ATCC 24843) (Fission yeast).